The following is a 216-amino-acid chain: Cytidylate kinase (216 aa).

10–18 (GPAGAGKST) lines the ATP pocket.

This sequence belongs to the cytidylate kinase family. Type 1 subfamily.

The protein localises to the cytoplasm. It carries out the reaction CMP + ATP = CDP + ADP. The catalysed reaction is dCMP + ATP = dCDP + ADP. In Clostridioides difficile (strain 630) (Peptoclostridium difficile), this protein is Cytidylate kinase.